The following is a 128-amino-acid chain: Calcitonin gene-related peptide 1 (128 aa).

An N-terminal signal peptide occupies residues methionine 1–alanine 25. Residues alanine 26–glutamine 80 constitute a propeptide that is removed on maturation. The cysteines at positions 84 and 89 are disulfide-linked. Phenylalanine 119 is modified (phenylalanine amide). Positions aspartate 125–alanine 128 are excised as a propeptide.

This sequence belongs to the calcitonin family. As to expression, expressed in spinal cord.

The protein localises to the secreted. In terms of biological role, CGRP1/CALCA is a peptide hormone that induces vasodilation mediated by the CALCRL-RAMP1 receptor complex. Dilates a variety of vessels including the coronary, cerebral and systemic vasculature. Its abundance in the CNS also points toward a neurotransmitter or neuromodulator role. It also elevates platelet cAMP. CGRP1 can also bind and activate CALCR-RAMP1 (AMYR1) receptor complex. The protein is Calcitonin gene-related peptide 1 of Homo sapiens (Human).